Consider the following 268-residue polypeptide: MEMKKKINLELRNRSPEEVTELVLDNCLCVNGEIEGLNDTFKELEFLSMANVELSSLARLPSLNKLRKLELSDNIISGGLEVLAEKCPNLTYLNLSGNKIKDLSTVEALQNLKNLKSLDLFNCEITNLEDYRESIFELLQQITYLDGFDQEDNEAPDSEEEDDEDGDEDDEEEEENEAGPPEGYEEEEEEEEEEDEDEDEDEDEAGSELGEGEEEVGLSYLMKEEIQDEEDDDDYVEEGEEEEEEEEGGLRGEKRKRDAEDDGEEEDD.

Met-1 bears the N-acetylmethionine mark. LRR repeat units follow at residues 18-38, 43-64, 65-87, and 89-110; these read EVTE…EGLN, ELEF…PSLN, KLRK…AEKC, and NLTY…EALQ. Lys-68 participates in a covalent cross-link: Glycyl lysine isopeptide (Lys-Gly) (interchain with G-Cter in SUMO2). The LRRCT domain occupies 123–161; the sequence is CEITNLEDYRESIFELLQQITYLDGFDQEDNEAPDSEEE. Acidic residues-rich tracts occupy residues 149–216 and 226–247; these read DQED…EEEV and IQDE…EEEE. Residues 149–268 are disordered; that stretch reads DQEDNEAPDS…AEDDGEEEDD (120 aa). The interval 215-268 is ZID domain; the sequence is EVGLSYLMKEEIQDEEDDDDYVEEGEEEEEEEEGGLRGEKRKRDAEDDGEEEDD. Over residues 248-259 the composition is skewed to basic and acidic residues; it reads GGLRGEKRKRDA.

Belongs to the ANP32 family. In terms of assembly, interacts with the importin alpha KPNA1 and KPNA2. Component of a SWR1-like complex, composed of EP400, KAT5/TIP60, TRRAP, BRD8, RUVBL1, RUVBL2, ING3 and ANP32E; the complex does not contain SRCAP. Interacts with H2A.Z/H2AZ1. Post-translationally, phosphorylated. The phosphorylation is nuclear localization signal (NLS)-dependent. Expressed in peripheral blood leukocytes, colon, small intestine, prostate, thymus, spleen, skeletal muscle, liver and kidney.

It localises to the cytoplasm. The protein resides in the nucleus. Histone chaperone that specifically mediates the genome-wide removal of histone H2A.Z/H2AZ1 from the nucleosome: removes H2A.Z/H2AZ1 from its normal sites of deposition, especially from enhancer and insulator regions. Not involved in deposition of H2A.Z/H2AZ1 in the nucleosome. May stabilize the evicted H2A.Z/H2AZ1-H2B dimer, thus shifting the equilibrium towards dissociation and the off-chromatin state. Inhibits activity of protein phosphatase 2A (PP2A). Does not inhibit protein phosphatase 1. May play a role in cerebellar development and synaptogenesis. The sequence is that of Acidic leucine-rich nuclear phosphoprotein 32 family member E (ANP32E) from Homo sapiens (Human).